Reading from the N-terminus, the 334-residue chain is Large ribosomal subunit protein uL3 (334 aa).

The span at 1–10 shows a compositional bias: basic residues; the sequence is MGMKKSRPRR. The segment at 1 to 20 is disordered; sequence MGMKKSRPRRGSLAFSPRKR.

This sequence belongs to the universal ribosomal protein uL3 family. In terms of assembly, part of the 50S ribosomal subunit. Forms a cluster with proteins L14 and L24e.

One of the primary rRNA binding proteins, it binds directly near the 3'-end of the 23S rRNA, where it nucleates assembly of the 50S subunit. This is Large ribosomal subunit protein uL3 from Methanococcus maripaludis (strain C7 / ATCC BAA-1331).